A 128-amino-acid chain; its full sequence is UPF0325 protein YaeH (128 aa).

It belongs to the UPF0325 family.

This chain is UPF0325 protein YaeH, found in Escherichia coli (strain ATCC 8739 / DSM 1576 / NBRC 3972 / NCIMB 8545 / WDCM 00012 / Crooks).